The sequence spans 142 residues: Sec-independent protein translocase protein TatB (142 aa).

A helical membrane pass occupies residues 2-22; sequence FANVGWGEMLVLVIAGLVILG. The segment at 89–142 is disordered; sequence DDSIFTGKFDQNGKSEKPEQKPEKPQSAPGPAAAVPDQPAGGRSGSTPYDTDAT. Basic and acidic residues predominate over residues 99–112; it reads QNGKSEKPEQKPEK. The segment covering 133-142 has biased composition (polar residues); that stretch reads GSTPYDTDAT.

The protein belongs to the TatB family. In terms of assembly, the Tat system comprises two distinct complexes: a TatABC complex, containing multiple copies of TatA, TatB and TatC subunits, and a separate TatA complex, containing only TatA subunits. Substrates initially bind to the TatABC complex, which probably triggers association of the separate TatA complex to form the active translocon.

The protein resides in the cell membrane. In terms of biological role, part of the twin-arginine translocation (Tat) system that transports large folded proteins containing a characteristic twin-arginine motif in their signal peptide across membranes. Together with TatC, TatB is part of a receptor directly interacting with Tat signal peptides. TatB may form an oligomeric binding site that transiently accommodates folded Tat precursor proteins before their translocation. The protein is Sec-independent protein translocase protein TatB of Mycolicibacterium vanbaalenii (strain DSM 7251 / JCM 13017 / BCRC 16820 / KCTC 9966 / NRRL B-24157 / PYR-1) (Mycobacterium vanbaalenii).